The following is a 65-amino-acid chain: Oxiana weak toxin (65 aa).

Cystine bridges form between C3–C24, C6–C11, C17–C42, C46–C57, and C58–C63.

This sequence belongs to the three-finger toxin family. Ancestral subfamily. Orphan group II sub-subfamily. As to expression, expressed by the venom gland.

The protein localises to the secreted. In terms of biological role, binds to muscle and neuronal nicotinic acetylcholine receptors (nAChR). It binds to extracellular domain of rat alpha-7/CHRNA7 nAChR (IC(50)=2.2 uM) and to Torpedo californica membranes (IC(50)=30 uM). In Naja oxiana (Central Asian cobra), this protein is Oxiana weak toxin.